Consider the following 634-residue polypeptide: MDDDGGGSPGHYGGGGIHLVCEYCGHGSEYAEDDADDGFFTCRQCSAIHTSTQNTATNPFDFPMTPAHLSAHRRPTQPTPTPKPFPAPRGAATGAAAPDFDDLGEPSEPRDFATGANAWGNPEDVAARVRWRYVRGLQVILQRQLEALVERHRVGSLAASLAGTIWLRWVAASKVFDEMWVHKMLAIAASVEEGHSASKDKQSELEGDAQKSQSSYEFLFLRSLRMMLPVYSTLAVCFLACHVARETILPTDICRWAMEGKLPYVAAFTQVDKLLGSSLNDCPLSSRQLFRPTRVIGAWQLEAAAGSIAQKIGLLLPSVNFYLIAQRFLKELSLPIEKILPHACRIYEWAMPAELWLSSNPGRVPSRVCVMAILIVALRVLYGINGQGIWESIAQTENAVGSDPEASAPHSIEPDSNNSEEFDARELLCTLAASYDKINVGHDYSKEVHSYLKYCKDVVFTGMTFSLEEEHLIDIFWDMYKGKEVMLLDENAKLCQEKLRTTNGVNKRCRDGRFADTKCCSTPLGNCALQSIKSKMEENGFCYVSPRKRLVSDGYLLYTRRESSGSLIYVAHADYYILLRPFAKLAEVDVRVLHSSVLKLERRLGWIEERVGRSLNTLQNLHDEASDDERPVSD.

An RRN7-type zinc finger spans residues 19-51; it reads LVCEYCGHGSEYAEDDADDGFFTCRQCSAIHTS. Residues C21, C24, C42, and C45 each contribute to the Zn(2+) site. The segment at 51–80 is B-reader; that stretch reads STQNTATNPFDFPMTPAHLSAHRRPTQPTP. The disordered stretch occupies residues 54 to 107; sequence NTATNPFDFPMTPAHLSAHRRPTQPTPTPKPFPAPRGAATGAAAPDFDDLGEPS. Residues 77-87 show a composition bias toward pro residues; sequence QPTPTPKPFPA. The tract at residues 81-83 is B-linker; the sequence is TPK. An N-terminal cyclin fold region spans residues 84–281; that stretch reads PFPAPRGAAT…DKLLGSSLND (198 aa). The segment covering 88 to 98 has biased composition (low complexity); sequence PRGAATGAAAP. Positions 282–284 are C-terminal cyclin fold; the sequence is CPL.

The protein belongs to the RRN7/TAF1B family.

It localises to the nucleus. Its subcellular location is the nucleolus. Its function is as follows. Component of RNA polymerase I core factor complex that acts as a GTF2B/TFIIB-like factor and plays a key role in multiple steps during transcription initiation such as pre-initiation complex (PIC) assembly and postpolymerase recruitment events in polymerase I (Pol I) transcription. Binds rDNA promoters and plays a role in Pol I recruitment. This Oryza sativa subsp. japonica (Rice) protein is TATA box-binding protein-associated factor RNA polymerase I subunit B.